Consider the following 170-residue polypeptide: Urease accessory protein UreE (170 aa).

The tract at residues 137-170 (PFDPESGAYAHAGREQSHAHSHEHSHADGHTHAH) is disordered. Positions 148-170 (AGREQSHAHSHEHSHADGHTHAH) are enriched in basic and acidic residues.

This sequence belongs to the UreE family.

It localises to the cytoplasm. Its function is as follows. Involved in urease metallocenter assembly. Binds nickel. Probably functions as a nickel donor during metallocenter assembly. The chain is Urease accessory protein UreE from Pseudoalteromonas translucida (strain TAC 125).